The following is a 337-amino-acid chain: WRKY transcription factor 23 (337 aa).

The tract at residues 100-160 (INPPATPNSS…KNNQKRQREA (61 aa)) is disordered. The segment covering 106–118 (PNSSSISSASSEA) has biased composition (low complexity). Basic residues predominate over residues 142–155 (HTKKQLKAKKNNQK). The segment at residues 168-233 (SEVDHLEDGY…YEGQHTHISP (66 aa)) is a DNA-binding region (WRKY).

This sequence belongs to the WRKY group II-c family.

Its subcellular location is the nucleus. Transcription factor. Interacts specifically with the W box (5'-(T)TGAC[CT]-3'), a frequently occurring elicitor-responsive cis-acting element. This is WRKY transcription factor 23 (WRKY23) from Arabidopsis thaliana (Mouse-ear cress).